A 100-amino-acid polypeptide reads, in one-letter code: uncharacterized protein (100 aa).

A helical membrane pass occupies residues 28–45 (VFLVFYIITMVKIYIFLI).

The protein resides in the membrane. This is an uncharacterized protein from Saccharomyces cerevisiae (strain ATCC 204508 / S288c) (Baker's yeast).